A 67-amino-acid chain; its full sequence is Large ribosomal subunit protein bL35 (67 aa).

It belongs to the bacterial ribosomal protein bL35 family.

The chain is Large ribosomal subunit protein bL35 from Methylorubrum extorquens (strain CM4 / NCIMB 13688) (Methylobacterium extorquens).